The chain runs to 929 residues: Transcription initiation factor TFIID subunit 3 (929 aa).

Disordered regions lie at residues 131–152 and 176–197; these read IVSS…TSAE and LGKR…RPRL. 4 positions are modified to phosphoserine: serine 183, serine 199, serine 229, and serine 243. Disordered stretches follow at residues 221–358 and 405–578; these read TQKI…ETIQ and DPFE…PWKE. The span at 265 to 288 shows a compositional bias: low complexity; the sequence is TKSFTPKTKTKTSSPGQKTKSPKT. N6-acetyllysine is present on lysine 266. Phosphoserine occurs at positions 291, 297, and 301. Composition is skewed to polar residues over residues 340 to 358 and 434 to 466; these read PNRT…ETIQ and PKAS…SWTM. Threonine 501 carries the phosphothreonine modification. Residues 504–514 show a composition bias toward basic and acidic residues; the sequence is PLHKVYEEKTK. The span at 523 to 537 shows a compositional bias: basic residues; the sequence is KKLKKELKTKMKKKE. Residues 538-578 are compositionally biased toward basic and acidic residues; sequence KQRDREREKDKNKDKSKEKDKVKEKEKDKETGRETKYPWKE. A Glycyl lysine isopeptide (Lys-Gly) (interchain with G-Cter in SUMO2) cross-link involves residue lysine 581. 2 stretches are compositionally biased toward basic and acidic residues: residues 603-612 and 621-648; these read KLKDGLVRKE and KDRE…DKMK. The tract at residues 603–658 is disordered; sequence KLKDGLVRKEKEKHKDKKKDREKGKKDKDKREKEKVKDKGREDKMKAPAPPLVLPP. Position 667 is a phosphoserine (serine 667). A compositionally biased stretch (basic and acidic residues) spans 692–701; sequence EKEKVKEKEK. The tract at residues 692–748 is disordered; the sequence is EKEKVKEKEKKKDKKEKKKKKEKEKEKKEKEREKEKREREKREKEKEKHKHEKIKVE. Residues 702-713 show a composition bias toward basic residues; the sequence is KKDKKEKKKKKE. Residues 714 to 737 are compositionally biased toward basic and acidic residues; that stretch reads KEKEKKEKEREKEKREREKREKEK. A Glycyl lysine isopeptide (Lys-Gly) (interchain with G-Cter in SUMO2) cross-link involves residue lysine 746. At serine 755 the chain carries Phosphoserine. Residue lysine 776 is modified to N6-acetyllysine. The segment covering 778–787 has biased composition (low complexity); the sequence is VPAPEAKPAP. Residues 778-807 form a disordered region; sequence VPAPEAKPAPSQNRPKTPPPAPAPAPGPML. Over residues 793-804 the composition is skewed to pro residues; that stretch reads KTPPPAPAPAPG. A PHD-type zinc finger spans residues 865–915; sequence IWICPGCNKPDDGSPMIGCDDCDDWYHWPCVGIMTAPPEEMQWFCPKCANK. Zn(2+)-binding residues include cysteine 868, cysteine 871, cysteine 883, cysteine 886, histidine 891, cysteine 894, cysteine 909, and cysteine 912.

Belongs to the TAF3 family. In terms of assembly, component of the TFIID basal transcription factor complex, composed of TATA-box-binding protein TBP, and a number of TBP-associated factors (TAFs), including TAF1, TAF2, TAF3, TAF4, TAF5, TAF6, TAF7, TAF8, TAF9, TAF10, TAF11, TAF12 and TAF13. Interacts with TAF10 via the histone fold. Interacts with TAF13, TBP, SAP130 and GCN5L2. Interacts with TBPL2.

It is found in the nucleus. The TFIID basal transcription factor complex plays a major role in the initiation of RNA polymerase II (Pol II)-dependent transcription. TFIID recognizes and binds promoters with or without a TATA box via its subunit TBP, a TATA-box-binding protein, and promotes assembly of the pre-initiation complex (PIC). The TFIID complex consists of TBP and TBP-associated factors (TAFs), including TAF1, TAF2, TAF3, TAF4, TAF5, TAF6, TAF7, TAF8, TAF9, TAF10, TAF11, TAF12 and TAF13. The TFIID complex structure can be divided into 3 modules TFIID-A, TFIID-B, and TFIID-C. TAF3 forms the TFIID-A module together with TAF5 and TBP. Required in complex with TBPL2 for the differentiation of myoblasts into myocytes. The TAF3-TBPL2 complex replaces TFIID at specific promoters at an early stage in the differentiation process. The polypeptide is Transcription initiation factor TFIID subunit 3 (TAF3) (Homo sapiens (Human)).